Reading from the N-terminus, the 513-residue chain is Bifunctional pantoate ligase/cytidylate kinase (513 aa).

The interval 1–283 (MVQVFRTIAG…VGSTRLIDNL (283 aa)) is pantoate--beta-alanine ligase. 30 to 37 (MGSLHAGH) is an ATP binding site. His-37 functions as the Proton donor in the catalytic mechanism. Gln-61 contributes to the (R)-pantoate binding site. Position 61 (Gln-61) interacts with beta-alanine. An ATP-binding site is contributed by 150–153 (GAKD). Gln-156 contacts (R)-pantoate. ATP contacts are provided by residues Val-179 and 187–190 (MSSR). Residues 284-513 (VLNHRLPIIA…IELYKKYNKG (230 aa)) are cytidylate kinase.

It in the N-terminal section; belongs to the pantothenate synthetase family. The protein in the C-terminal section; belongs to the cytidylate kinase family. Type 1 subfamily.

The protein resides in the cytoplasm. The enzyme catalyses (R)-pantoate + beta-alanine + ATP = (R)-pantothenate + AMP + diphosphate + H(+). It catalyses the reaction CMP + ATP = CDP + ADP. The catalysed reaction is dCMP + ATP = dCDP + ADP. It functions in the pathway cofactor biosynthesis; (R)-pantothenate biosynthesis; (R)-pantothenate from (R)-pantoate and beta-alanine: step 1/1. In terms of biological role, catalyzes the condensation of pantoate with beta-alanine in an ATP-dependent reaction via a pantoyl-adenylate intermediate. Functionally, catalyzes the transfer of a phosphate group from ATP to either CMP or dCMP to form CDP or dCDP and ADP, respectively. The protein is Bifunctional pantoate ligase/cytidylate kinase of Synechocystis sp. (strain ATCC 27184 / PCC 6803 / Kazusa).